Consider the following 1704-residue polypeptide: Phospholipid-transporting ATPase ABCA3 (1704 aa).

N-linked (GlcNAc...) asparagine glycosylation occurs at asparagine 14. The chain crosses the membrane as a helical span at residues 22–42 (VLVTVLELFLPLLFSGILIWL). N-linked (GlcNAc...) asparagine glycosylation is found at asparagine 53, asparagine 124, asparagine 140, and asparagine 228. 6 helical membrane-spanning segments follow: residues 261 to 283 (YQLPLLLMLSFTYTSLTIIRAVV), 307 to 327 (AWFLMFFLFFLIVVSFMTLLF), 344 to 364 (SLVLAFLLCFAISSISFSFMV), 373 to 393 (IAAAVGGFLYFFTYTPYFFVA), 405 to 425 (LLSCLLSNVAMAMGAQLIGKF), and 447 to 467 (FCFGQVLGMLLLDSALYGLVT). An ABC transporter 1 domain is found at 530-763 (IKIKHLSKVF…YGAGYHMTLV (234 aa)). ATP is bound at residue 566-573 (GHNGAGKT). An N-linked (GlcNAc...) asparagine glycan is attached at asparagine 620. The next 7 helical transmembrane spans lie at 925–945 (MVAAQVLVPLTCLTLALLAIH), 1100–1120 (IALNLLIAMAFLASTFSILAV), 1144–1164 (SALLWDLISFLVPSLLLLVVF), 1183–1203 (LLLMLYGWAIIPLMYLMSFFF), 1213–1233 (LTIFNILSGIATFIMVTIMRI), 1245–1265 (LDHVFLVLPNHCLGMAVSNFY), and 1310–1330 (MAASGGIYLTLLFLIETNLLW). Asparagine 1350 carries N-linked (GlcNAc...) asparagine glycosylation. Residues 1381 to 1614 (LIINELSKVY…FGSGYSLQAK (234 aa)) enclose the ABC transporter 2 domain. An ATP-binding site is contributed by 1416–1423 (GFNGAGKT).

The protein belongs to the ABC transporter superfamily. ABCA family. Homooligomer; disulfide-linked. N-glycosylated. Localization at intracellular vesicles is accompanied by processing of oligosaccharide from high mannose type to complex type. N-linked glycosylation at Asn-124 and Asn-140 is required for stability and efficient anterograde trafficking and prevents from proteasomal degradation. Post-translationally, proteolytically cleaved by CTSL and to a lower extent by CTSB within multivesicular bodies (MVB) and lamellar bodies (LB) leading to a mature form of 150 kDa. As to expression, highly expressed in the lung and moderately expressed in the kidney, adipose, macrophage, and spleen.

It is found in the endosome. The protein resides in the multivesicular body membrane. It localises to the cytoplasmic vesicle membrane. Its subcellular location is the late endosome membrane. The protein localises to the lysosome membrane. The enzyme catalyses a 1,2-diacyl-sn-glycero-3-phospho-(1'-sn-glycerol)(in) + ATP + H2O = a 1,2-diacyl-sn-glycero-3-phospho-(1'-sn-glycerol)(out) + ADP + phosphate + H(+). It catalyses the reaction a 1,2-diacyl-sn-glycero-3-phosphocholine(in) + ATP + H2O = a 1,2-diacyl-sn-glycero-3-phosphocholine(out) + ADP + phosphate + H(+). It carries out the reaction ATP + H2O + phospholipidSide 1 = ADP + phosphate + phospholipidSide 2.. The catalysed reaction is ATP + H2O + xenobioticSide 1 = ADP + phosphate + xenobioticSide 2.. The enzyme catalyses 1,2-dihexadecanoyl-sn-glycero-3-phosphocholine(in) + ATP + H2O = 1,2-dihexadecanoyl-sn-glycero-3-phosphocholine(out) + ADP + phosphate + H(+). It catalyses the reaction cholesterol(in) + ATP + H2O = cholesterol(out) + ADP + phosphate + H(+). Catalyzes the ATP-dependent transport of phospholipids such as phosphatidylcholine and phosphoglycerol from the cytoplasm into the lumen side of lamellar bodies, in turn participates in the lamellar bodies biogenesis and homeostasis of pulmonary surfactant. Transports preferentially phosphatidylcholine containing short acyl chains. In addition plays a role as an efflux transporter of miltefosine across macrophage membranes and free cholesterol (FC) through intralumenal vesicles by removing FC from the cell as a component of surfactant and protects cells from free cholesterol toxicity. The sequence is that of Phospholipid-transporting ATPase ABCA3 (Abca3) from Mus musculus (Mouse).